The following is a 361-amino-acid chain: Large-conductance mechanosensitive channel MscMJLR (361 aa).

The next 5 membrane-spanning stretches (helical) occupy residues 20 to 40, 65 to 85, 89 to 109, 137 to 157, and 177 to 197; these read ILSLISIILFIVIGKYANALI, LPVAIAIILSGFYFGVNFLYL, LKTAVNEGILTAFILCVVVFF, IVVLTKKLVRLVVWVVGLLLI, and LAVALASQNLVSNLIAGLIIL.

It belongs to the MscS (TC 1.A.23) family.

It is found in the cell membrane. Its function is as follows. Large-conductance mechanosensitive channel that opens in response to stretch forces in the membrane lipid bilayer. Selective for cations. Rectifies with voltage. In Methanocaldococcus jannaschii (strain ATCC 43067 / DSM 2661 / JAL-1 / JCM 10045 / NBRC 100440) (Methanococcus jannaschii), this protein is Large-conductance mechanosensitive channel MscMJLR.